The sequence spans 339 residues: Fructose-1,6-bisphosphatase isozyme 2 (339 aa).

Residues 3–10 (DRSPFETD) form an important for interaction with ALDOA region. AMP is bound by residues Val18 and 28 to 32 (TGELT). Mg(2+) is bound by residues Asp69 and Glu98. Residue 113–114 (KY) participates in AMP binding. Asp119, Leu121, and Asp122 together coordinate Mg(2+). Position 122 (Asp122) interacts with substrate. Residue Arg141 participates in AMP binding. A Nuclear localization signal motif is present at residues 204–208 (KKKGK). 213–216 (NEGY) is a binding site for substrate. Tyr216 and Tyr219 each carry phosphotyrosine. Residues 245 to 249 (YVGSM), Tyr265, and Lys275 each bind substrate. Glu281 contributes to the Mg(2+) binding site.

The protein belongs to the FBPase class 1 family. As to quaternary structure, homotetramer. Interacts with ALDOA; the interaction blocks inhibition by physiological concentrations of AMP and reduces inhibition by Ca(2+). Interacts with alpha-actinin and F-actin. It depends on Mg(2+) as a cofactor.

Its subcellular location is the cell junction. The protein resides in the cytoplasm. It is found in the nucleus. The protein localises to the myofibril. It localises to the sarcomere. Its subcellular location is the z line. The enzyme catalyses beta-D-fructose 1,6-bisphosphate + H2O = beta-D-fructose 6-phosphate + phosphate. It participates in carbohydrate biosynthesis; gluconeogenesis. Subject to complex allosteric regulation. The enzyme can assume an active R-state, or an inactive T-state. Intermediate conformations may exist. AMP acts as an allosteric inhibitor. Fructose 2,6-bisphosphate acts as a competitive inhibitor. Strongly inhibited by Ca(2+). In terms of biological role, catalyzes the hydrolysis of fructose 1,6-bisphosphate to fructose 6-phosphate in the presence of divalent cations and probably participates in glycogen synthesis from carbohydrate precursors, such as lactate. This chain is Fructose-1,6-bisphosphatase isozyme 2 (FBP2), found in Bos taurus (Bovine).